A 226-amino-acid polypeptide reads, in one-letter code: UPF0758 protein Daci_1904 (226 aa).

In terms of domain architecture, MPN spans 104-226 (ALASPEAVAR…SLSMAGQGML (123 aa)). Residues H175, H177, and D188 each contribute to the Zn(2+) site. A JAMM motif motif is present at residues 175–188 (HNHPSGQVQASAAD).

Belongs to the UPF0758 family.

This is UPF0758 protein Daci_1904 from Delftia acidovorans (strain DSM 14801 / SPH-1).